The primary structure comprises 692 residues: Elongation factor G (692 aa).

Positions Asn8 to Thr283 constitute a tr-type G domain. GTP contacts are provided by residues Ala17–Thr24, Asp81–His85, and Asn135–Asp138.

It belongs to the TRAFAC class translation factor GTPase superfamily. Classic translation factor GTPase family. EF-G/EF-2 subfamily.

It is found in the cytoplasm. Catalyzes the GTP-dependent ribosomal translocation step during translation elongation. During this step, the ribosome changes from the pre-translocational (PRE) to the post-translocational (POST) state as the newly formed A-site-bound peptidyl-tRNA and P-site-bound deacylated tRNA move to the P and E sites, respectively. Catalyzes the coordinated movement of the two tRNA molecules, the mRNA and conformational changes in the ribosome. The protein is Elongation factor G of Helicobacter pylori (strain Shi470).